The sequence spans 350 residues: Small ribosomal subunit biogenesis GTPase RsgA (350 aa).

The disordered stretch occupies residues 1–30; that stretch reads MSKRKLTQNQQRRIQSNNAKTLHRHQHRHK. Residues 7–20 show a composition bias toward polar residues; it reads TQNQQRRIQSNNAK. The span at 21-30 shows a compositional bias: basic residues; the sequence is TLHRHQHRHK. The 169-residue stretch at 106-274 folds into the CP-type G domain; it reads HNQIVRPDYY…LIDSPGIREF (169 aa). GTP-binding positions include 162–165 and 216–224; these read NKAD and GQSGVGKSS. Zn(2+) contacts are provided by Cys-298, Cys-303, His-305, and Cys-311.

This sequence belongs to the TRAFAC class YlqF/YawG GTPase family. RsgA subfamily. As to quaternary structure, monomer. Associates with 30S ribosomal subunit, binds 16S rRNA. It depends on Zn(2+) as a cofactor.

The protein resides in the cytoplasm. Functionally, one of several proteins that assist in the late maturation steps of the functional core of the 30S ribosomal subunit. Helps release RbfA from mature subunits. May play a role in the assembly of ribosomal proteins into the subunit. Circularly permuted GTPase that catalyzes slow GTP hydrolysis, GTPase activity is stimulated by the 30S ribosomal subunit. The protein is Small ribosomal subunit biogenesis GTPase RsgA of Histophilus somni (strain 129Pt) (Haemophilus somnus).